The sequence spans 302 residues: ATP synthase gamma chain (302 aa).

Belongs to the ATPase gamma chain family. As to quaternary structure, F-type ATPases have 2 components, CF(1) - the catalytic core - and CF(0) - the membrane proton channel. CF(1) has five subunits: alpha(3), beta(3), gamma(1), delta(1), epsilon(1). CF(0) has three main subunits: a, b and c.

It localises to the cell inner membrane. Its function is as follows. Produces ATP from ADP in the presence of a proton gradient across the membrane. The gamma chain is believed to be important in regulating ATPase activity and the flow of protons through the CF(0) complex. This is ATP synthase gamma chain from Bartonella bacilliformis (strain ATCC 35685 / KC583 / Herrer 020/F12,63).